A 304-amino-acid chain; its full sequence is N-acetylmuramic acid 6-phosphate etherase 1 (304 aa).

Residues 1-10 (MENSHLGSLT) are compositionally biased toward polar residues. The interval 1-20 (MENSHLGSLTTERRNERSKR) is disordered. Residues 58–221 (AVGSLKKGGR…STAAMIKMGK (164 aa)) form the SIS domain. Glutamate 86 acts as the Proton donor in catalysis. Glutamate 117 is a catalytic residue.

The protein belongs to the GCKR-like family. MurNAc-6-P etherase subfamily. Homodimer.

It carries out the reaction N-acetyl-D-muramate 6-phosphate + H2O = N-acetyl-D-glucosamine 6-phosphate + (R)-lactate. It functions in the pathway amino-sugar metabolism; N-acetylmuramate degradation. Functionally, specifically catalyzes the cleavage of the D-lactyl ether substituent of MurNAc 6-phosphate, producing GlcNAc 6-phosphate and D-lactate. In Bacillus licheniformis (strain ATCC 14580 / DSM 13 / JCM 2505 / CCUG 7422 / NBRC 12200 / NCIMB 9375 / NCTC 10341 / NRRL NRS-1264 / Gibson 46), this protein is N-acetylmuramic acid 6-phosphate etherase 1.